The following is a 737-amino-acid chain: NAD(P)H-quinone oxidoreductase subunit 5, chloroplastic (737 aa).

A run of 16 helical transmembrane segments spans residues 9-29 (WIIP…LILF), 40-60 (WAFQ…YLSI), 89-109 (IDPL…MVLI), 125-145 (FAYM…SNLI), 147-167 (IYIF…FWFT), 185-205 (GDFG…SFEF), 219-239 (NELN…GAVA), 258-278 (TPIS…FLVA), 286-306 (VIPY…LLGA), 327-347 (LGYM…FHLI), 354-374 (ALLF…VGYS), 396-416 (ITFL…CFWS), 425-445 (WLYS…TAFY), 543-563 (LFPI…GIPF), 602-622 (VVSV…YKPI), and 717-737 (SYLF…YLLF).

It belongs to the complex I subunit 5 family. In terms of assembly, NDH is composed of at least 16 different subunits, 5 of which are encoded in the nucleus.

Its subcellular location is the plastid. The protein resides in the chloroplast thylakoid membrane. The enzyme catalyses a plastoquinone + NADH + (n+1) H(+)(in) = a plastoquinol + NAD(+) + n H(+)(out). The catalysed reaction is a plastoquinone + NADPH + (n+1) H(+)(in) = a plastoquinol + NADP(+) + n H(+)(out). In terms of biological role, NDH shuttles electrons from NAD(P)H:plastoquinone, via FMN and iron-sulfur (Fe-S) centers, to quinones in the photosynthetic chain and possibly in a chloroplast respiratory chain. The immediate electron acceptor for the enzyme in this species is believed to be plastoquinone. Couples the redox reaction to proton translocation, and thus conserves the redox energy in a proton gradient. The sequence is that of NAD(P)H-quinone oxidoreductase subunit 5, chloroplastic (ndhF) from Solanum lycopersicum (Tomato).